Consider the following 200-residue polypeptide: dITP/XTP pyrophosphatase (200 aa).

8 to 13 (TGNQGK) contacts substrate. Asp-69 (proton acceptor) is an active-site residue. Asp-69 serves as a coordination point for Mg(2+). Residues Ser-70, 154–157 (FGYD), Lys-177, and 182–183 (HR) each bind substrate.

The protein belongs to the HAM1 NTPase family. As to quaternary structure, homodimer. Mg(2+) serves as cofactor.

The catalysed reaction is XTP + H2O = XMP + diphosphate + H(+). It carries out the reaction dITP + H2O = dIMP + diphosphate + H(+). The enzyme catalyses ITP + H2O = IMP + diphosphate + H(+). Pyrophosphatase that catalyzes the hydrolysis of nucleoside triphosphates to their monophosphate derivatives, with a high preference for the non-canonical purine nucleotides XTP (xanthosine triphosphate), dITP (deoxyinosine triphosphate) and ITP. Seems to function as a house-cleaning enzyme that removes non-canonical purine nucleotides from the nucleotide pool, thus preventing their incorporation into DNA/RNA and avoiding chromosomal lesions. In Vibrio cholerae serotype O1 (strain ATCC 39315 / El Tor Inaba N16961), this protein is dITP/XTP pyrophosphatase.